We begin with the raw amino-acid sequence, 539 residues long: Chaperonin GroEL 1 (539 aa).

ATP-binding positions include 30-33 (TLGP), Lys-51, 87-91 (DGTTT), Gly-415, 480-482 (NAA), and Asp-496.

This sequence belongs to the chaperonin (HSP60) family. In terms of assembly, forms a cylinder of 14 subunits composed of two heptameric rings stacked back-to-back. Interacts with the co-chaperonin GroES.

The protein localises to the cytoplasm. It carries out the reaction ATP + H2O + a folded polypeptide = ADP + phosphate + an unfolded polypeptide.. Its function is as follows. Together with its co-chaperonin GroES, plays an essential role in assisting protein folding. The GroEL-GroES system forms a nano-cage that allows encapsulation of the non-native substrate proteins and provides a physical environment optimized to promote and accelerate protein folding. The polypeptide is Chaperonin GroEL 1 (Erythrobacter litoralis (strain HTCC2594)).